The primary structure comprises 139 residues: Putative pre-16S rRNA nuclease (139 aa).

Belongs to the YqgF nuclease family.

The protein resides in the cytoplasm. Functionally, could be a nuclease involved in processing of the 5'-end of pre-16S rRNA. The chain is Putative pre-16S rRNA nuclease from Legionella pneumophila (strain Lens).